A 910-amino-acid chain; its full sequence is MTKKTIQASCRKNKLYLTPHLNDVLYLHYSGYNAIDGLDEYVGLKCLWLECNAISNISGLDHQSQLRCLYLHNNLIKKIENLQHCKQLDTLNLSHNHIAKIENCGSDILPVLNTLNISHNYLKSIESLAELRKCDFVSVLDISHNRIEDIAIVKVLADMKGLRVLTLVGNPVVNDIPSYRKTLILECKSLTYLDSRPVFDKDRACAEAWKRGGYEEERKEHQRWKKEEQRKMRRSINATLRLRHRGDGEPELLKTSSDEEEEEKEGSAAGRGDFEELEYQSNDVAWKEMEALFNQHTKGDTQQAQKLAEERKASTNSVDYITGSDSNSDPTLVTDCDSCVRNSSRACSSRSDTSDSEDMFDKIVPKKHRKLASSMRPEVSLSDSSSSSSETEDEAGSILDSKLDRQNTITEFIDEYKRFFHSVDLRDPKCVLKNRHKIVRPQTAKSQRTEPIVYEGVLKAMEQNSNGAKIEQARQERFEANERSLAKEAVLERLMKGHAEVDMNIEQQMISIGGKQHNFNEYRLEVFRQDQEKLQNLIDRVTAQKEKYNAHIDSIHDQLANIMEDYGQISEKLRKVDDMIQNIGDEVVVHQEKERDGLEVIQELEPITIAEQIVENMTKEQVPDEVEANDKASDATIDPVDQLSSDESAIDLGELNQHVDAQVEVGPSDPKDATTSKPIPEEFGSDPVYRKFIDIQYEIDKLTEDQIFTALSEAARELQEEELETKLVHDAIDEYWSTDLEDFRRNLNLDAHPIVQRFKRFIECQGTDTDDTDSEAHVRRLENAYHRYERRLSNHLFDEYLMLSRKASIATTTGGESSATELELVELDGGHVLRASTSRRATAWDLKETVEDPVEELEELNEEEDPALKEAGDFKHDELEDEESKPEEKTLKSAEVLGMQEPLADVQGDH.

LRR repeat units follow at residues 43-64 (GLKCLWLECNAISNISGLDHQS), 65-86 (QLRCLYLHNNLIKKIENLQHCK), 87-108 (QLDTLNLSHNHIAKIENCGSDI), 111-132 (VLNTLNISHNYLKSIESLAELR), and 136-157 (FVSVLDISHNRIEDIAIVKVLA). Residues 171–209 (PVVNDIPSYRKTLILECKSLTYLDSRPVFDKDRACAEAW) form the LRRCT domain. A compositionally biased stretch (basic and acidic residues) spans 217–230 (ERKEHQRWKKEEQR). 6 disordered regions span residues 217–275 (ERKE…GDFE), 297–332 (TKGDTQQAQKLAEERKASTNSVDYITGSDSNSDPTL), 344–399 (SRAC…GSIL), 620–642 (EQVPDEVEANDKASDATIDPVDQ), 662–682 (QVEVGPSDPKDATTSKPIPEE), and 855–910 (EELE…QGDH). Over residues 314–331 (STNSVDYITGSDSNSDPT) the composition is skewed to polar residues. Low complexity predominate over residues 380–389 (SLSDSSSSSS). The segment covering 620 to 633 (EQVPDEVEANDKAS) has biased composition (basic and acidic residues). Positions 855–865 (EELEELNEEED) are enriched in acidic residues. The segment covering 866–878 (PALKEAGDFKHDE) has biased composition (basic and acidic residues).

The protein belongs to the DNAAF1 family.

Its subcellular location is the cell projection. The protein resides in the cilium. Functionally, cilium-specific protein required for cilia structures. This chain is Dynein axonemal assembly factor 1 homolog, found in Anopheles gambiae (African malaria mosquito).